The primary structure comprises 79 residues: Small ribosomal subunit protein bS18 (79 aa).

The protein belongs to the bacterial ribosomal protein bS18 family. In terms of assembly, part of the 30S ribosomal subunit. Forms a tight heterodimer with protein bS6.

Binds as a heterodimer with protein bS6 to the central domain of the 16S rRNA, where it helps stabilize the platform of the 30S subunit. The chain is Small ribosomal subunit protein bS18 from Bacillus pumilus (strain SAFR-032).